A 290-amino-acid chain; its full sequence is Bifunctional protein FolD 1 (290 aa).

NADP(+) contacts are provided by residues 164-166 (GRS), Ile-193, and Ile-236.

It belongs to the tetrahydrofolate dehydrogenase/cyclohydrolase family. Homodimer.

The catalysed reaction is (6R)-5,10-methylene-5,6,7,8-tetrahydrofolate + NADP(+) = (6R)-5,10-methenyltetrahydrofolate + NADPH. The enzyme catalyses (6R)-5,10-methenyltetrahydrofolate + H2O = (6R)-10-formyltetrahydrofolate + H(+). It participates in one-carbon metabolism; tetrahydrofolate interconversion. Catalyzes the oxidation of 5,10-methylenetetrahydrofolate to 5,10-methenyltetrahydrofolate and then the hydrolysis of 5,10-methenyltetrahydrofolate to 10-formyltetrahydrofolate. In Geobacter metallireducens (strain ATCC 53774 / DSM 7210 / GS-15), this protein is Bifunctional protein FolD 1.